We begin with the raw amino-acid sequence, 377 residues long: Presenilin-associated rhomboid-like protein, mitochondrial (377 aa).

The transit peptide at 1-52 directs the protein to the mitochondrion; the sequence is MAWRGWAQRGWGCGQAWTLPVCGGSYEELTAALAPSRLLRRRFNFFIQQKCG. The Mitochondrial matrix portion of the chain corresponds to 53 to 99; sequence FRKAPRKVEPRRSDTSSEAYKRSALIPPVEETAFYPSPYPIRTLVKP. Phosphoserine is present on residues S65 and S68. A helical membrane pass occupies residues 100-119; it reads LFFTVGFTGCAFGSAAIWQY. Residues 120 to 165 lie on the Mitochondrial intermembrane side of the membrane; sequence ESLKSKVQSYFDGIKADWLDSIRPQKEGDFRKEINKWWNNLSDGQR. Residues 166-185 traverse the membrane as a helical segment; the sequence is TVTGIIAANVFVFCLWRVPS. Residues 186–205 are Mitochondrial matrix-facing; sequence LQRTMIRYFTSNPASKVLCS. A helical membrane pass occupies residues 206–228; that stretch reads PMLLSTFSHFSLFHMAANMYVLW. The Mitochondrial intermembrane segment spans residues 229 to 242; the sequence is SFSSSIVNILGQEQ. A helical transmembrane segment spans residues 243-260; sequence FMAVYLSAGVISTFVSYV. The Mitochondrial matrix portion of the chain corresponds to 261-270; it reads CKVATGRYGP. A helical membrane pass occupies residues 271–287; the sequence is SLGASGAIMTVLAAVCT. The active-site Nucleophile is S275. Topologically, residues 288-293 are mitochondrial intermembrane; sequence KIPEGR. A helical transmembrane segment spans residues 294–316; the sequence is LAIIFLPMFTFTAGNALKAIIAM. The Mitochondrial matrix segment spans residues 317 to 330; that stretch reads DTAGMILGWKFFDH. A helical transmembrane segment spans residues 331-352; sequence AAHLGGALFGIWYITYGHELIW. The active site involves H333. The Mitochondrial intermembrane segment spans residues 353-377; it reads KNREPLVKIWHEMRTNSPKKGGGSK.

The protein belongs to the peptidase S54 family. Interacts with PSEN1 and PSEN2. Binds OPA1. In terms of processing, P-beta is proteolytically processed (beta-cleavage) in a PARL-dependent manner.

It is found in the mitochondrion inner membrane. Its subcellular location is the nucleus. The catalysed reaction is Cleaves type-1 transmembrane domains using a catalytic dyad composed of serine and histidine that are contributed by different transmembrane domains.. Its function is as follows. Required for the control of apoptosis during postnatal growth. Essential for proteolytic processing of an antiapoptotic form of OPA1 which prevents the release of mitochondrial cytochrome c in response to intrinsic apoptotic signals. Required for the maturation of PINK1 into its 52kDa mature form after its cleavage by mitochondrial-processing peptidase (MPP). Promotes cleavage of serine/threonine-protein phosphatase PGAM5 in damaged mitochondria in response to loss of mitochondrial membrane potential. Mediates differential cleavage of PINK1 and PGAM5 depending on the health status of mitochondria, disassociating from PINK1 and associating with PGAM5 in response to mitochondrial membrane potential loss. Required for processing of CLPB into a form with higher protein disaggregase activity by removing an autoinhibitory N-terminal peptide. Promotes processing of DIABLO/SMAC in the mitochondrion which is required for DIABLO apoptotic activity. Also required for cleavage of STARD7 and TTC19. Promotes changes in mitochondria morphology regulated by phosphorylation of P-beta domain. The polypeptide is Presenilin-associated rhomboid-like protein, mitochondrial (PARL) (Bos taurus (Bovine)).